Here is a 931-residue protein sequence, read N- to C-terminus: Probable zinc protease PqqL (931 aa).

Zn(2+) is bound at residue His-80. Glu-83 serves as the catalytic Proton acceptor. Zn(2+) contacts are provided by His-84 and Glu-160.

This sequence belongs to the peptidase M16 family. Requires Zn(2+) as cofactor.

This is Probable zinc protease PqqL (pqqL) from Escherichia coli (strain K12).